Reading from the N-terminus, the 223-residue chain is UPF0173 metal-dependent hydrolase Amet_4625 (223 aa).

This sequence belongs to the UPF0173 family.

This Alkaliphilus metalliredigens (strain QYMF) protein is UPF0173 metal-dependent hydrolase Amet_4625.